Consider the following 593-residue polypeptide: MSGKIEYISGPVVKAELPGARLYELVFVGEIKLFGEVVRIQGEKAFIQVYEDTTGLKPGEPVERTGEPLSAWLGPTIIGKIYDGVQRPLRNIEEISKNPFIARGIGYDKAPPLDLKAEFDFKPAVKPGEEVYPGDVLGSVKETEPMTHYILYPPLPEHAPGVVEWIADGKYKVDDVIARVKTKRGVVEVKMWHKWPVRRPRPFKEKLPPVEPLITGVRTVDTMFPIAKGGTAAVPGPFGSGKTVMIRTLSMFAQSRFIIPVLCGERGNEAADALQGLLKLKDPSTGRPLLERTTIIVNTSNMPVAAREASVYMGTTLGEYFRDQGYDVLVLADSTSRWAEAMREVALRIGEMPSEEGYPAYLPTRLAEFYERAGRVVLYGSKERVGSLTIAASVSPPGGDFTEPVTSNTLRFIGAFWPLSPRLAYSRHYPAIDWLVAFSRYVDTVEVWWSKNVSPEWRRIRDALQSILVKEAELQEIVRILGTEALSEYEKHILNVAFMIREGFLKQDAYNPVDTPSAPIKQFLLMKAIYTYYEEGLKAIESGVPASVLRELETVKRLPRLRMEVTNDVAKEELTKFIESLVAEIRATTNRRG.

ATP is bound at residue 236-243 (GPFGSGKT).

Belongs to the ATPase alpha/beta chains family. As to quaternary structure, has multiple subunits with at least A(3), B(3), C, D, E, F, H, I and proteolipid K(x).

The protein resides in the cell membrane. The enzyme catalyses ATP + H2O + 4 H(+)(in) = ADP + phosphate + 5 H(+)(out). Its function is as follows. Produces ATP from ADP in the presence of a proton gradient across the membrane. The archaeal alpha chain is a catalytic subunit. Functionally, component of the A-type ATP synthase that produces ATP from ADP in the presence of a proton gradient across the membrane. The A chain is the catalytic subunit. The sequence is that of A-type ATP synthase subunit A from Pyrobaculum aerophilum (strain ATCC 51768 / DSM 7523 / JCM 9630 / CIP 104966 / NBRC 100827 / IM2).